Consider the following 328-residue polypeptide: Ketol-acid reductoisomerase (NADP(+)) (328 aa).

The 180-residue stretch at 2 to 181 (AKIYRETDAD…GFTRVGVIET (180 aa)) folds into the KARI N-terminal Rossmann domain. Residues 25–28 (YGIQ), Arg48, Ser52, and 82–85 (DMVQ) each bind NADP(+). His107 is an active-site residue. Gly133 serves as a coordination point for NADP(+). The region spanning 182-327 (TFAEETETDL…EDLRRLMRSG (146 aa)) is the KARI C-terminal knotted domain. The Mg(2+) site is built by Asp190, Glu194, Glu226, and Glu230. Residue Ser251 participates in substrate binding.

The protein belongs to the ketol-acid reductoisomerase family. Mg(2+) serves as cofactor.

The catalysed reaction is (2R)-2,3-dihydroxy-3-methylbutanoate + NADP(+) = (2S)-2-acetolactate + NADPH + H(+). It carries out the reaction (2R,3R)-2,3-dihydroxy-3-methylpentanoate + NADP(+) = (S)-2-ethyl-2-hydroxy-3-oxobutanoate + NADPH + H(+). It functions in the pathway amino-acid biosynthesis; L-isoleucine biosynthesis; L-isoleucine from 2-oxobutanoate: step 2/4. The protein operates within amino-acid biosynthesis; L-valine biosynthesis; L-valine from pyruvate: step 2/4. Its function is as follows. Involved in the biosynthesis of branched-chain amino acids (BCAA). Catalyzes an alkyl-migration followed by a ketol-acid reduction of (S)-2-acetolactate (S2AL) to yield (R)-2,3-dihydroxy-isovalerate. In the isomerase reaction, S2AL is rearranged via a Mg-dependent methyl migration to produce 3-hydroxy-3-methyl-2-ketobutyrate (HMKB). In the reductase reaction, this 2-ketoacid undergoes a metal-dependent reduction by NADPH to yield (R)-2,3-dihydroxy-isovalerate. The polypeptide is Ketol-acid reductoisomerase (NADP(+)) (Caldivirga maquilingensis (strain ATCC 700844 / DSM 13496 / JCM 10307 / IC-167)).